The primary structure comprises 209 residues: MSKQKHSASSGRWLKEHFDDKYANEARKKGYRSRAYFKIEEIQTKDKLLKSGMTVVDLGAAPGGWSQYAAKIIGEEGQIIACDLLPMDPIAGVSFLQGDFRDEAVLDALLERIQPSMVDVVMSDMAPNIAGNNSVDQPRAMYLVELALDMCRQVLAPNGSFVVKVFQGEGFDQFVKEVRDMFKVVKIRKPDSSRARSREVFVVATGYKG.

Residues G63, W65, D83, D99, and D124 each coordinate S-adenosyl-L-methionine. K164 acts as the Proton acceptor in catalysis.

The protein belongs to the class I-like SAM-binding methyltransferase superfamily. RNA methyltransferase RlmE family.

It localises to the cytoplasm. It catalyses the reaction uridine(2552) in 23S rRNA + S-adenosyl-L-methionine = 2'-O-methyluridine(2552) in 23S rRNA + S-adenosyl-L-homocysteine + H(+). Its function is as follows. Specifically methylates the uridine in position 2552 of 23S rRNA at the 2'-O position of the ribose in the fully assembled 50S ribosomal subunit. This chain is Ribosomal RNA large subunit methyltransferase E, found in Vibrio campbellii (strain ATCC BAA-1116).